Consider the following 339-residue polypeptide: Aspartate carbamoyltransferase catalytic subunit (339 aa).

Carbamoyl phosphate-binding residues include arginine 69 and threonine 70. Residue lysine 97 participates in L-aspartate binding. Residues arginine 119, histidine 149, and glutamine 152 each coordinate carbamoyl phosphate. L-aspartate contacts are provided by arginine 182 and arginine 237. Positions 278 and 279 each coordinate carbamoyl phosphate.

It belongs to the aspartate/ornithine carbamoyltransferase superfamily. ATCase family. As to quaternary structure, heterododecamer (2C3:3R2) of six catalytic PyrB chains organized as two trimers (C3), and six regulatory PyrI chains organized as three dimers (R2).

It catalyses the reaction carbamoyl phosphate + L-aspartate = N-carbamoyl-L-aspartate + phosphate + H(+). It functions in the pathway pyrimidine metabolism; UMP biosynthesis via de novo pathway; (S)-dihydroorotate from bicarbonate: step 2/3. Catalyzes the condensation of carbamoyl phosphate and aspartate to form carbamoyl aspartate and inorganic phosphate, the committed step in the de novo pyrimidine nucleotide biosynthesis pathway. The polypeptide is Aspartate carbamoyltransferase catalytic subunit (Hydrogenovibrio crunogenus (strain DSM 25203 / XCL-2) (Thiomicrospira crunogena)).